Here is a 299-residue protein sequence, read N- to C-terminus: Putative cuticle collagen 155 (299 aa).

The signal sequence occupies residues 1–27 (MEFEQRIKAYRFVAYSAVAFSVVAVLS). 4 triple-helical region regions span residues 103 to 132 (GAAG…PGHP), 151 to 177 (GPPG…PGQD), 181 to 202 (GAPG…GAPG), and 216 to 278 (GAPG…VGEK). The segment at 107-278 (PAGTPGKPGR…SGTPGGVGEK (172 aa)) is disordered. Positions 129–161 (PGHPPQQPCDPITPPPCQPCPQGPPGPPGPPGP) are enriched in pro residues. Residues 163-172 (GDAGGNGNPG) are compositionally biased toward gly residues. Low complexity predominate over residues 173 to 197 (SPGQDGQPGAPGNKGPSGPNGNPGA). Residues 215–233 (PGAPGPQGTPGPQGPPGQP) are compositionally biased toward pro residues. Positions 250–268 (PNGNPGQPGADGNPGAPGQ) are enriched in low complexity.

This sequence belongs to the cuticular collagen family. Collagen polypeptide chains are complexed within the cuticle by disulfide bonds and other types of covalent cross-links.

Functionally, nematode cuticles are composed largely of collagen-like proteins. The cuticle functions both as an exoskeleton and as a barrier to protect the worm from its environment. This chain is Putative cuticle collagen 155 (col-155), found in Caenorhabditis elegans.